We begin with the raw amino-acid sequence, 281 residues long: Bifunctional protein FolD (281 aa).

NADP(+)-binding positions include 164–166 (GRS), Ser-189, and Thr-230.

It belongs to the tetrahydrofolate dehydrogenase/cyclohydrolase family. Homodimer.

It catalyses the reaction (6R)-5,10-methylene-5,6,7,8-tetrahydrofolate + NADP(+) = (6R)-5,10-methenyltetrahydrofolate + NADPH. It carries out the reaction (6R)-5,10-methenyltetrahydrofolate + H2O = (6R)-10-formyltetrahydrofolate + H(+). It functions in the pathway one-carbon metabolism; tetrahydrofolate interconversion. In terms of biological role, catalyzes the oxidation of 5,10-methylenetetrahydrofolate to 5,10-methenyltetrahydrofolate and then the hydrolysis of 5,10-methenyltetrahydrofolate to 10-formyltetrahydrofolate. This chain is Bifunctional protein FolD, found in Dictyoglomus turgidum (strain DSM 6724 / Z-1310).